Reading from the N-terminus, the 495-residue chain is Cytochrome P450 monooxygenase 113 (495 aa).

Residues 2–22 (FLQIAACFTVIGLLYGLVSNL) form a helical membrane-spanning segment. Cys-428 contributes to the heme binding site.

It belongs to the cytochrome P450 family. Heme serves as cofactor.

The protein resides in the membrane. It functions in the pathway secondary metabolite biosynthesis. In terms of biological role, cytochrome P450 monooxygenase that is able to use 4-ethoxybenzoic acid as a substrate for oxidation. This chain is Cytochrome P450 monooxygenase 113, found in Postia placenta (strain ATCC 44394 / Madison 698-R) (Brown rot fungus).